The chain runs to 373 residues: Transaldolase (373 aa).

The Schiff-base intermediate with substrate role is filled by Lys-143.

The protein belongs to the transaldolase family. Type 2 subfamily.

The protein localises to the cytoplasm. The catalysed reaction is D-sedoheptulose 7-phosphate + D-glyceraldehyde 3-phosphate = D-erythrose 4-phosphate + beta-D-fructose 6-phosphate. It participates in carbohydrate degradation; pentose phosphate pathway; D-glyceraldehyde 3-phosphate and beta-D-fructose 6-phosphate from D-ribose 5-phosphate and D-xylulose 5-phosphate (non-oxidative stage): step 2/3. Its function is as follows. Transaldolase is important for the balance of metabolites in the pentose-phosphate pathway. This chain is Transaldolase (tal), found in Mycobacterium bovis (strain ATCC BAA-935 / AF2122/97).